A 373-amino-acid polypeptide reads, in one-letter code: Lipoyl synthase, mitochondrial (373 aa).

The transit peptide at 1 to 26 directs the protein to the mitochondrion; the sequence is MALRCWDAARSLGSRIFGRYACSVRA. 7 residues coordinate [4Fe-4S] cluster: Cys105, Cys110, Cys116, Cys136, Cys140, Cys143, and Ser351. In terms of domain architecture, Radical SAM core spans 121-340; that stretch reads EYATATATIM…EEVGNELGFH (220 aa).

Belongs to the radical SAM superfamily. Lipoyl synthase family. The cofactor is [4Fe-4S] cluster.

The protein resides in the mitochondrion. It catalyses the reaction [[Fe-S] cluster scaffold protein carrying a second [4Fe-4S](2+) cluster] + N(6)-octanoyl-L-lysyl-[protein] + 2 oxidized [2Fe-2S]-[ferredoxin] + 2 S-adenosyl-L-methionine + 4 H(+) = [[Fe-S] cluster scaffold protein] + N(6)-[(R)-dihydrolipoyl]-L-lysyl-[protein] + 4 Fe(3+) + 2 hydrogen sulfide + 2 5'-deoxyadenosine + 2 L-methionine + 2 reduced [2Fe-2S]-[ferredoxin]. The protein operates within protein modification; protein lipoylation via endogenous pathway; protein N(6)-(lipoyl)lysine from octanoyl-[acyl-carrier-protein]: step 2/2. Catalyzes the radical-mediated insertion of two sulfur atoms into the C-6 and C-8 positions of the octanoyl moiety bound to the lipoyl domains of lipoate-dependent enzymes, thereby converting the octanoylated domains into lipoylated derivatives. In Rattus norvegicus (Rat), this protein is Lipoyl synthase, mitochondrial (Lias).